The primary structure comprises 268 residues: Ribosomal RNA small subunit methyltransferase A (268 aa).

6 residues coordinate S-adenosyl-L-methionine: asparagine 17, leucine 19, glycine 44, glutamate 65, aspartate 89, and asparagine 110.

It belongs to the class I-like SAM-binding methyltransferase superfamily. rRNA adenine N(6)-methyltransferase family. RsmA subfamily.

It localises to the cytoplasm. The enzyme catalyses adenosine(1518)/adenosine(1519) in 16S rRNA + 4 S-adenosyl-L-methionine = N(6)-dimethyladenosine(1518)/N(6)-dimethyladenosine(1519) in 16S rRNA + 4 S-adenosyl-L-homocysteine + 4 H(+). In terms of biological role, specifically dimethylates two adjacent adenosines (A1518 and A1519) in the loop of a conserved hairpin near the 3'-end of 16S rRNA in the 30S particle. May play a critical role in biogenesis of 30S subunits. In Acidithiobacillus ferrooxidans (strain ATCC 53993 / BNL-5-31) (Leptospirillum ferrooxidans (ATCC 53993)), this protein is Ribosomal RNA small subunit methyltransferase A.